Here is a 350-residue protein sequence, read N- to C-terminus: Pro-cathepsin H (350 aa).

The N-terminal stretch at 1–19 is a signal peptide; sequence MAQWTLLIVFFCVATAAAG. Positions 20–113 are cleaved as a propeptide — activation peptide; it reads LSFHDSNPIR…WEEFRSHRLG (94 aa). A glycan (N-linked (GlcNAc...) asparagine) is linked at N117. A propeptide spans 122-132 (removed in mature form); that stretch reads LKGNHRITDVV. 2 disulfide bridges follow: C154–C197 and C188–C230. C157 is an active-site residue. N-linked (GlcNAc...) asparagine glycosylation is present at N177. N-linked (GlcNAc...) asparagine glycosylation occurs at N246. C288 and C338 are oxidised to a cystine. Active-site residues include H297 and N317.

Belongs to the peptidase C1 family. Interacts with KPI104 and KPI106. Composed of a mini chain and a large chain. The large chain may be split into heavy and light chain. All chains are held together by disulfide bonds.

It is found in the vacuole. Its subcellular location is the lysosome. It carries out the reaction Hydrolysis of proteins, acting as an aminopeptidase (notably, cleaving Arg-|-Xaa bonds) as well as an endopeptidase.. In terms of biological role, may play a role in proteolysis leading to mobilization of nitrogen during senescence and starvation. The protein is Pro-cathepsin H of Medicago truncatula (Barrel medic).